Reading from the N-terminus, the 419-residue chain is MNNQKQQKPTLTGQRFKTRKRDEKERFDPSQFQESIVQGLNQTGTDLEAVAKFLDASGAKLDYRRYAETLFDILVAGGMLAPGGTLSDDLTRTEYCLFTASEDLETMQAYAQVFNKLIRRYKYLEKGFEEEIKKLLLFLKGFTESERNKLAMLTGILLANGNISASILNSLFNENLVKEGVSAAFAVKLFKSWINEKDINSVAASLRKVGMDNRLMELFPANKRSCEHFSKYFTDAGLKELSDFARNQQSIGARKELQKELQEQMSRGETLKDIIAYVREEMKKTSISEQTMIGIVWTSVMSSVEWNKKEELVTEQAIKHLKQYSPLLKAFTSQGLSELTLLLKIQEYCYDNIHFMKAFQKIVVLLYKADVLSEEVILKWYTEGHVAKGKSVFLEQMKKFVEWLKNAEEESESEEEEGD.

The segment covering 1–15 has biased composition (polar residues); sequence MNNQKQQKPTLTGQR. Residues 1–29 are disordered; it reads MNNQKQQKPTLTGQRFKTRKRDEKERFDP. In terms of domain architecture, W2 spans 247 to 414; sequence NQQSIGARKE…KNAEEESESE (168 aa).

Belongs to the BZW family.

In terms of biological role, translation initiation regulator which may repress repeat-associated non-AUG (RAN) initiated translation probably by acting as a competitive inhibitor of eukaryotic translation initiation factor 5 (EIF5) function. Enhances histone H4 gene transcription but does not seem to bind DNA directly. This Danio rerio (Zebrafish) protein is eIF5-mimic protein 2-A (bzw1a).